The following is a 401-amino-acid chain: Phosphoglycerate kinase 3, cytosolic (401 aa).

(2R)-3-phosphoglycerate is bound by residues Val-24, Asp-25, Asn-27, Arg-41, Ser-63, His-64, Gly-66, Arg-67, Arg-122, His-154, and Arg-155. Gly-200 contributes to the ADP binding site. Gly-200 provides a ligand contact to CDP. AMP contacts are provided by Lys-202 and Lys-206. An ATP-binding site is contributed by Lys-206. Gly-224 serves as a coordination point for ADP. A CDP-binding site is contributed by Gly-224. Gly-225 and Gly-297 together coordinate AMP. Positions 225, 297, and 321 each coordinate ATP. 2 residues coordinate CDP: Gly-322 and Phe-327. ADP is bound at residue Phe-327. An AMP-binding site is contributed by Glu-328. The ATP site is built by Glu-328, Asp-359, and Ser-360. A Mg(2+)-binding site is contributed by Asp-359.

The protein belongs to the phosphoglycerate kinase family. Monomer. The cofactor is Mg(2+). Expressed in roots, leaves and inflorescence.

Its subcellular location is the cytoplasm. It catalyses the reaction (2R)-3-phosphoglycerate + ATP = (2R)-3-phospho-glyceroyl phosphate + ADP. It participates in carbohydrate degradation; glycolysis; pyruvate from D-glyceraldehyde 3-phosphate: step 2/5. This chain is Phosphoglycerate kinase 3, cytosolic, found in Arabidopsis thaliana (Mouse-ear cress).